The primary structure comprises 496 residues: Probable malate:quinone oxidoreductase (496 aa).

This sequence belongs to the MQO family. FAD is required as a cofactor.

It carries out the reaction (S)-malate + a quinone = a quinol + oxaloacetate. It participates in carbohydrate metabolism; tricarboxylic acid cycle; oxaloacetate from (S)-malate (quinone route): step 1/1. This chain is Probable malate:quinone oxidoreductase, found in Prochlorococcus marinus (strain NATL2A).